The primary structure comprises 250 residues: Uracil-DNA glycosylase (250 aa).

Asp78 serves as the catalytic Proton acceptor.

This sequence belongs to the uracil-DNA glycosylase (UDG) superfamily. UNG family.

It is found in the cytoplasm. The enzyme catalyses Hydrolyzes single-stranded DNA or mismatched double-stranded DNA and polynucleotides, releasing free uracil.. Functionally, excises uracil residues from the DNA which can arise as a result of misincorporation of dUMP residues by DNA polymerase or due to deamination of cytosine. This Albidiferax ferrireducens (strain ATCC BAA-621 / DSM 15236 / T118) (Rhodoferax ferrireducens) protein is Uracil-DNA glycosylase.